A 1653-amino-acid polypeptide reads, in one-letter code: Clathrin heavy chain (1653 aa).

Residues 1–483 are globular terminal domain; it reads MSDLPIEFTE…FDTTLALACY (483 aa). WD40-like repeat regions lie at residues 23–66, 67–107, 108–152, 153–198, 199–263, 264–307, and 308–336; these read FLDF…KNMG, GDSA…LDEP, VIFW…ANLN, NTQI…QAID, GHVA…PDAT, NDFP…ITAE, and SVFT…VEIS. A binding site for the uncoating ATPase, involved in lattice disassembly region spans residues 453-469; that stretch reads EKWLKEDKLECSEELGD. The flexible linker stretch occupies residues 484–527; it reads LRAGAHAKVISCLAELQQFEKIIPYCQKVGYQPNFLVLISSLIR. A heavy chain arm region spans residues 528–1653; the sequence is SSPDRASEFA…SAMNVQPTGF (1126 aa). CHCR repeat units lie at residues 543-689, 692-834, 839-978, 985-1130, 1134-1275, 1280-1426, and 1429-1572; these read NPET…QTVV, ATKF…DEAF, LQSV…QLID, IPEL…IPDA, YIKA…FKLA, LNLI…SLLV, and LTSL…REGF. Residue Lys-1107 forms a Glycyl lysine isopeptide (Lys-Gly) (interchain with G-Cter in ubiquitin) linkage. Residues 1219–1528 are involved in binding clathrin light chain; that stretch reads AARLCYSAVS…LLYRRNKKWA (310 aa).

This sequence belongs to the clathrin heavy chain family. Clathrin triskelions, composed of 3 heavy chains and 3 light chains, are the basic subunits of the clathrin coat. Interacts with the auxilin-like clathrin uncoating factor SWA2. Interacts with INP53.

The protein resides in the cytoplasmic vesicle membrane. Its subcellular location is the membrane. It is found in the coated pit. In terms of biological role, clathrin is the major protein of the polyhedral coat of coated pits and vesicles. In yeast, it is involved in the retention of proteins in an intracellular membrane compartment, presumably the trans-Golgi. The polypeptide is Clathrin heavy chain (CHC1) (Saccharomyces cerevisiae (strain ATCC 204508 / S288c) (Baker's yeast)).